A 72-amino-acid polypeptide reads, in one-letter code: Protein RALF-like 11 (72 aa).

The signal sequence occupies residues 1–17 (MKAWLICLLVICAAVIA). Disulfide bonds link cysteine 34/cysteine 43 and cysteine 63/cysteine 69.

It belongs to the plant rapid alkalinization factor (RALF) family.

The protein resides in the secreted. Cell signaling peptide that may regulate plant stress, growth, and development. Mediates a rapid alkalinization of extracellular space by mediating a transient increase in the cytoplasmic Ca(2+) concentration leading to a calcium-dependent signaling events through a cell surface receptor and a concomitant activation of some intracellular mitogen-activated protein kinases. The protein is Protein RALF-like 11 (RALFL11) of Arabidopsis thaliana (Mouse-ear cress).